Here is a 376-residue protein sequence, read N- to C-terminus: Quinolinate synthase (376 aa).

Residues His-57 and Ser-78 each coordinate iminosuccinate. Cys-123 lines the [4Fe-4S] cluster pocket. Iminosuccinate is bound by residues 149 to 151 and Ser-166; that span reads YAN. A [4Fe-4S] cluster-binding site is contributed by Cys-210. Iminosuccinate is bound by residues 236–238 and Thr-253; that span reads HPE. Cys-307 contributes to the [4Fe-4S] cluster binding site.

This sequence belongs to the quinolinate synthase family. Type 1 subfamily. The cofactor is [4Fe-4S] cluster.

The protein localises to the cytoplasm. The enzyme catalyses iminosuccinate + dihydroxyacetone phosphate = quinolinate + phosphate + 2 H2O + H(+). The protein operates within cofactor biosynthesis; NAD(+) biosynthesis; quinolinate from iminoaspartate: step 1/1. Catalyzes the condensation of iminoaspartate with dihydroxyacetone phosphate to form quinolinate. This chain is Quinolinate synthase, found in Paraburkholderia phymatum (strain DSM 17167 / CIP 108236 / LMG 21445 / STM815) (Burkholderia phymatum).